A 249-amino-acid polypeptide reads, in one-letter code: Triosephosphate isomerase (249 aa).

Residues Asn12 and Lys14 each coordinate substrate. An N6-acetyllysine modification is found at Lys14. 3'-nitrotyrosine is present on Tyr68. Ser80 carries the post-translational modification Phosphoserine. His96 functions as the Electrophile in the catalytic mechanism. Ser106 is modified (phosphoserine). Lys142 participates in a covalent cross-link: Glycyl lysine isopeptide (Lys-Gly) (interchain with G-Cter in SUMO1). Lys149 is modified (N6-succinyllysine). N6-acetyllysine; alternate is present on Lys156. Residue Lys156 is modified to N6-succinyllysine; alternate. Glu166 acts as the Proton acceptor in catalysis. Thr173 is modified (phosphothreonine). Lys194 is subject to N6-acetyllysine; alternate. The residue at position 194 (Lys194) is an N6-succinyllysine; alternate. Lys194 is subject to N6-methyllysine; alternate. Ser198 carries the phosphoserine modification. Residue Tyr209 is modified to 3'-nitrotyrosine. Ser212 carries the post-translational modification Phosphoserine. Thr214 is modified (phosphothreonine). Ser223 is subject to Phosphoserine. Lys238 carries the post-translational modification N6-acetyllysine.

This sequence belongs to the triosephosphate isomerase family. In terms of assembly, homodimer.

It is found in the cytoplasm. It catalyses the reaction dihydroxyacetone phosphate = methylglyoxal + phosphate. It carries out the reaction D-glyceraldehyde 3-phosphate = dihydroxyacetone phosphate. It participates in carbohydrate degradation; glycolysis; D-glyceraldehyde 3-phosphate from glycerone phosphate: step 1/1. It functions in the pathway carbohydrate biosynthesis; gluconeogenesis. Functionally, triosephosphate isomerase is an extremely efficient metabolic enzyme that catalyzes the interconversion between dihydroxyacetone phosphate (DHAP) and D-glyceraldehyde-3-phosphate (G3P) in glycolysis and gluconeogenesis. It is also responsible for the non-negligible production of methylglyoxal a reactive cytotoxic side-product that modifies and can alter proteins, DNA and lipids. The protein is Triosephosphate isomerase (Tpi1) of Rattus norvegicus (Rat).